Reading from the N-terminus, the 244-residue chain is Haloacid dehalogenase-like hydrolase domain-containing protein 3 (244 aa).

The protein belongs to the HAD-like hydrolase superfamily.

The protein is Haloacid dehalogenase-like hydrolase domain-containing protein 3 (hdhd3) of Xenopus laevis (African clawed frog).